A 425-amino-acid chain; its full sequence is Adenosine 3'-phospho 5'-phosphosulfate transporter 1 (425 aa).

The next 9 membrane-spanning stretches (helical) occupy residues 27 to 47, 102 to 122, 147 to 167, 232 to 252, 263 to 283, 303 to 323, 342 to 360, 365 to 387, and 391 to 411; these read FLIL…IYYV, VIIL…AMGV, TQFL…MILA, YSWF…LFLL, ITYT…FDAF, MMFG…IEQG, VFLL…YSTI, PIVF…TIMY, and LTFL…VDIH.

It belongs to the nucleotide-sugar transporter family. SLC35B subfamily.

The protein resides in the golgi apparatus membrane. Functionally, mediates the transport of adenosine 3'-phospho 5'-phosphosulfate (PAPS), from cytosol into Golgi. PAPS is a universal sulfuryl donor for sulfation events that take place in the Golgi. This chain is Adenosine 3'-phospho 5'-phosphosulfate transporter 1 (pst-1), found in Caenorhabditis elegans.